The chain runs to 420 residues: Threonine aspartase 1 (420 aa).

A disordered region spans residues 1-25 (MIMEKGMNSGEGLPSRSSQASAAKV). Thr234 (nucleophile) is an active-site residue.

This sequence belongs to the Ntn-hydrolase family. In terms of assembly, intramolecular proteolysis generates 2 subunits, alpha and beta, which reassemble through a non-covalent association to form the fully active enzyme.

In terms of biological role, protease responsible for KMT2A/MLL1 and KMT2D/MLL2 processing and activation. Through substrate activation, it controls the expression of HOXA genes, and the expression of key cell cycle regulators including CCNA1, CCNB1, CCNE1 and CDKN2A. The protein is Threonine aspartase 1 (Tasp1) of Mus musculus (Mouse).